The sequence spans 205 residues: Glycerol-3-phosphate acyltransferase (205 aa).

6 consecutive transmembrane segments (helical) span residues 7–27 (MTAL…VWVC), 54–74 (VVPA…VLWV), 80–100 (LPIW…SYPL), 116–136 (VLLM…ALLA), 141–161 (TAAV…YWLA), and 163–183 (EATL…AWNI).

This sequence belongs to the PlsY family. Probably interacts with PlsX.

It localises to the cell inner membrane. The catalysed reaction is an acyl phosphate + sn-glycerol 3-phosphate = a 1-acyl-sn-glycero-3-phosphate + phosphate. It participates in lipid metabolism; phospholipid metabolism. In terms of biological role, catalyzes the transfer of an acyl group from acyl-phosphate (acyl-PO(4)) to glycerol-3-phosphate (G3P) to form lysophosphatidic acid (LPA). This enzyme utilizes acyl-phosphate as fatty acyl donor, but not acyl-CoA or acyl-ACP. This is Glycerol-3-phosphate acyltransferase from Chromohalobacter salexigens (strain ATCC BAA-138 / DSM 3043 / CIP 106854 / NCIMB 13768 / 1H11).